The primary structure comprises 106 residues: Large ribosomal subunit protein eL42 (106 aa).

The interval 36-56 (FAQGKRRYDRKQSGYGGQTKP) is disordered.

It belongs to the eukaryotic ribosomal protein eL42 family.

This Coprinopsis cinerea (strain Okayama-7 / 130 / ATCC MYA-4618 / FGSC 9003) (Inky cap fungus) protein is Large ribosomal subunit protein eL42 (RPL44).